Here is a 452-residue protein sequence, read N- to C-terminus: Tubulin beta-2 chain (452 aa).

GTP contacts are provided by Gln11, Glu74, Ser143, Val147, Thr148, Gly149, Asn209, and Asn231. Glu74 contributes to the Mg(2+) binding site. Residues 431 to 452 form a disordered region; the sequence is QEATADDEAEFEEEGEVEGEYD. The segment covering 434–452 has biased composition (acidic residues); the sequence is TADDEAEFEEEGEVEGEYD.

The protein belongs to the tubulin family. As to quaternary structure, dimer of alpha and beta chains. A typical microtubule is a hollow water-filled tube with an outer diameter of 25 nm and an inner diameter of 15 nM. Alpha-beta heterodimers associate head-to-tail to form protofilaments running lengthwise along the microtubule wall with the beta-tubulin subunit facing the microtubule plus end conferring a structural polarity. Microtubules usually have 13 protofilaments but different protofilament numbers can be found in some organisms and specialized cells. The cofactor is Mg(2+).

Its subcellular location is the cytoplasm. It is found in the cytoskeleton. Its function is as follows. Tubulin is the major constituent of microtubules, a cylinder consisting of laterally associated linear protofilaments composed of alpha- and beta-tubulin heterodimers. Microtubules grow by the addition of GTP-tubulin dimers to the microtubule end, where a stabilizing cap forms. Below the cap, tubulin dimers are in GDP-bound state, owing to GTPase activity of alpha-tubulin. The sequence is that of Tubulin beta-2 chain from Homarus americanus (American lobster).